The following is an 89-amino-acid chain: MAKKSKIAKEQKRQELVNKYYELRKELKAKGDYEALRKLPRDSSPTRLTRRCKVTGRPRGVLRKFEMSRIAFREHAHKGQIPGVKKSSW.

Belongs to the universal ribosomal protein uS14 family. Part of the 30S ribosomal subunit. Contacts proteins S3 and S10.

Binds 16S rRNA, required for the assembly of 30S particles and may also be responsible for determining the conformation of the 16S rRNA at the A site. The chain is Small ribosomal subunit protein uS14A from Staphylococcus epidermidis (strain ATCC 35984 / DSM 28319 / BCRC 17069 / CCUG 31568 / BM 3577 / RP62A).